Consider the following 114-residue polypeptide: Lymphotactin (114 aa).

Positions 1-21 are cleaved as a signal peptide; the sequence is MRLLLLTFLGVCCLTPWVVEG. Cys-32 and Cys-69 are joined by a disulfide. The tract at residues 92 to 114 is disordered; it reads KNMAETVPTGAQRSTSTAITLTG. Residues 100-114 show a composition bias toward polar residues; sequence TGAQRSTSTAITLTG.

It belongs to the intercrine gamma family. Expressed in activated CD8(+) T cells. In the thymus, expressed by medullary thymic epithelial cells.

It is found in the secreted. Its function is as follows. Chemotactic activity for lymphocytes but not for monocytes or neutrophils. In thymus, mediates medullary accumulation of thymic dendritic cells and contributes to regulatoy T cell development, playing a role in self-tolerance establishment. The protein is Lymphotactin (Xcl1) of Mus musculus (Mouse).